A 156-amino-acid chain; its full sequence is Small ribosomal subunit protein uS7 (156 aa).

This sequence belongs to the universal ribosomal protein uS7 family. In terms of assembly, part of the 30S ribosomal subunit. Contacts proteins S9 and S11.

In terms of biological role, one of the primary rRNA binding proteins, it binds directly to 16S rRNA where it nucleates assembly of the head domain of the 30S subunit. Is located at the subunit interface close to the decoding center, probably blocks exit of the E-site tRNA. The protein is Small ribosomal subunit protein uS7 of Chromohalobacter salexigens (strain ATCC BAA-138 / DSM 3043 / CIP 106854 / NCIMB 13768 / 1H11).